We begin with the raw amino-acid sequence, 77 residues long: uncharacterized protein (77 aa).

One can recognise an Inhibitor I9 domain in the interval 5-74 (SYIVQLKDSV…FEPDQEMHTM (70 aa)).

This sequence belongs to the protease inhibitor I9 family.

It localises to the cytoplasm. The protein resides in the nucleus. This is an uncharacterized protein from Schizosaccharomyces pombe (strain 972 / ATCC 24843) (Fission yeast).